We begin with the raw amino-acid sequence, 202 residues long: Kunitz trypsin inhibitor 7 (202 aa).

An N-terminal signal peptide occupies residues 1 to 25 (MKTFRSMLISLLLVAITTTSGVVEG). A disulfide bridge connects residues Cys-69 and Cys-115. Residues Asn-93, Asn-136, Asn-144, and Asn-198 are each glycosylated (N-linked (GlcNAc...) asparagine).

It belongs to the protease inhibitor I3 (leguminous Kunitz-type inhibitor) family.

Exhibits Kunitz trypsin protease inhibitor activity. This is Kunitz trypsin inhibitor 7 from Arabidopsis thaliana (Mouse-ear cress).